The primary structure comprises 265 residues: Thioredoxin-related transmembrane protein 2 homolog (265 aa).

A signal peptide spans 1-32 (MLIPRLDEVRRALTAFHFFNTLLALAFPVIRS). The Extracellular segment spans residues 33–96 (TSLCDYVFAV…KIAGMFLFIR (64 aa)). A helical membrane pass occupies residues 97–117 (ADILPGIIYILACLIVTVLFP). Topologically, residues 118-265 (EPVYNGPEQV…KKGAKAKKED (148 aa)) are cytoplasmic. The 105-residue stretch at 126–230 (QVTYFQGEQL…RPLVNDSRRA (105 aa)) folds into the Thioredoxin domain. A Di-lysine motif motif is present at residues 262–265 (KKED).

Its subcellular location is the membrane. This is Thioredoxin-related transmembrane protein 2 homolog from Caenorhabditis elegans.